A 126-amino-acid polypeptide reads, in one-letter code: Putative gene 48 protein (126 aa).

The chain is Putative gene 48 protein (48) from Bacillus phage SP01 (Bacteriophage SP01).